The following is a 373-amino-acid chain: Probable tRNA sulfurtransferase (373 aa).

The THUMP domain occupies 54–158; sequence NKNIEELSKV…NDVAYFYHKI (105 aa). Residues 176 to 177, 201 to 202, lysine 256, glycine 278, and glutamine 287 contribute to the ATP site; these read LF and NF.

Belongs to the ThiI family.

The protein localises to the cytoplasm. It carries out the reaction [ThiI sulfur-carrier protein]-S-sulfanyl-L-cysteine + a uridine in tRNA + 2 reduced [2Fe-2S]-[ferredoxin] + ATP + H(+) = [ThiI sulfur-carrier protein]-L-cysteine + a 4-thiouridine in tRNA + 2 oxidized [2Fe-2S]-[ferredoxin] + AMP + diphosphate. It catalyses the reaction [ThiS sulfur-carrier protein]-C-terminal Gly-Gly-AMP + S-sulfanyl-L-cysteinyl-[cysteine desulfurase] + AH2 = [ThiS sulfur-carrier protein]-C-terminal-Gly-aminoethanethioate + L-cysteinyl-[cysteine desulfurase] + A + AMP + 2 H(+). It functions in the pathway cofactor biosynthesis; thiamine diphosphate biosynthesis. In terms of biological role, catalyzes the ATP-dependent transfer of a sulfur to tRNA to produce 4-thiouridine in position 8 of tRNAs, which functions as a near-UV photosensor. Also catalyzes the transfer of sulfur to the sulfur carrier protein ThiS, forming ThiS-thiocarboxylate. This is a step in the synthesis of thiazole, in the thiamine biosynthesis pathway. The sulfur is donated as persulfide by IscS. The polypeptide is Probable tRNA sulfurtransferase (Saccharolobus islandicus (strain M.16.4 / Kamchatka #3) (Sulfolobus islandicus)).